The chain runs to 205 residues: Recombination protein RecR (205 aa).

The C4-type zinc-finger motif lies at 58 to 75; sequence CSVCQNVTDRDADPCYIC. The 100-residue stretch at 83-182 folds into the Toprim domain; the sequence is SVICVVESPA…SVTKIARGIP (100 aa).

The protein belongs to the RecR family.

In terms of biological role, may play a role in DNA repair. It seems to be involved in an RecBC-independent recombinational process of DNA repair. It may act with RecF and RecO. The chain is Recombination protein RecR from Chlorobium limicola (strain DSM 245 / NBRC 103803 / 6330).